A 210-amino-acid polypeptide reads, in one-letter code: Probable GTP-binding protein EngB (210 aa).

The 175-residue stretch at 30–204 (QGYEVAFAGR…YKVLAGWMEL (175 aa)) folds into the EngB-type G domain. Residues 38–45 (GRSNAGKS), 64–68 (GRTQL), 82–85 (DLPG), 149–152 (TKAD), and 182–185 (LFSA) contribute to the GTP site. Mg(2+) is bound by residues S45 and T66.

It belongs to the TRAFAC class TrmE-Era-EngA-EngB-Septin-like GTPase superfamily. EngB GTPase family. Requires Mg(2+) as cofactor.

Necessary for normal cell division and for the maintenance of normal septation. The sequence is that of Probable GTP-binding protein EngB from Pseudomonas putida (strain W619).